The chain runs to 555 residues: Solute carrier family 22 member 2 (555 aa).

The Cytoplasmic segment spans residues 1–22 (MPTTVDDVLEHGGEFHFFQKQM). Residues 23-43 (FFLLALLSATFAPIYVGIVFL) form a helical membrane-spanning segment. The Extracellular portion of the chain corresponds to 44 to 150 (GFTPDHRCRS…LVCANSWMLD (107 aa)). Asn72 is a glycosylation site (N-linked (GlcNAc...) asparagine). Residues 151–171 (LFQSSVNVGFFIGSMSIGYIA) traverse the membrane as a helical segment. Residues 172-177 (DRFGRK) are Cytoplasmic-facing. The helical transmembrane segment at 178–198 (LCLLTTVLINAAAGVLMAISP) threads the bilayer. The Extracellular segment spans residues 199-208 (TYTWMLIFRL). The chain crosses the membrane as a helical span at residues 209 to 229 (IQGLVSKAGWLIGYILITEFV). The Cytoplasmic portion of the chain corresponds to 230 to 238 (GRRYRRTVG). A helical transmembrane segment spans residues 239–259 (IFYQVAYTVGLLVLAGVAYAL). At 260 to 263 (PHWR) the chain is on the extracellular side. The helical transmembrane segment at 264 to 284 (WLQFTVSLPNFFFLLYYWCIP) threads the bilayer. A Proline-rich sequence motif is present at residues 284-288 (PESPR). Topologically, residues 285–348 (ESPRWLISQN…VRTPQIRKHT (64 aa)) are cytoplasmic. Residues 349 to 369 (MILMYNWFTSSVLYQGLIMHM) traverse the membrane as a helical segment. At 370 to 375 (GLAGDN) the chain is on the extracellular side. The chain crosses the membrane as a helical span at residues 376–396 (IYLDFFYSALVEFPAAFMIIL). The Cytoplasmic segment spans residues 397–414 (TIDRIGRRYPWAASNMVA). A helical transmembrane segment spans residues 415-435 (GAACLASVFIPGDLQWLKIII). The Extracellular portion of the chain corresponds to 436–441 (SCLGRM). Residues 442–462 (GITMAYEIVCLVNAELYPTFI) traverse the membrane as a helical segment. The Cytoplasmic portion of the chain corresponds to 463–464 (RN). A helical transmembrane segment spans residues 465 to 485 (LGVHICSSMCDIGGIITPFLV). Topologically, residues 486–494 (YRLTNIWLE) are extracellular. A helical transmembrane segment spans residues 495 to 515 (LPLMVFGVLGLVAGGLVLLLP). At 516 to 555 (ETKGKALPETIEEAENMQRPRKNKEKMIYLQVQKLDIPLN) the chain is on the cytoplasmic side.

It belongs to the major facilitator (TC 2.A.1) superfamily. Organic cation transporter (TC 2.A.1.19) family. Post-translationally, tyrosine phosphorylated by tyrosine-protein kinase YES1. As to expression, mainly expressed in kidney, in the cortex and medulla. Localized in testis, mostly to peritubular myoid cells and Leydig cells and also detected along the basal membrane of Sertoli cells. Expressed in brain, in neurons of the cerebral cortex and in various subcortical nuclei. In the brain, also detected in the dopaminergic regions of the substantia nigra. Expressed in tracheal and bronchial ciliated epithelium in the respiratory tract. Also detected in secretory phase endometrium, in scattered stromal cells. Expressed in spleen, placenta, small intestine and spinal cord. Weakly expressed in prostate, uterus and lung. Mainly expressed in kidney, bone marrow and testis. Expressed in colon, skeletal muscle, spinal cord, placenta and liver.

It localises to the basolateral cell membrane. The protein resides in the basal cell membrane. Its subcellular location is the apical cell membrane. It carries out the reaction (R)-noradrenaline(out) = (R)-noradrenaline(in). The catalysed reaction is (R)-adrenaline(out) = (R)-adrenaline(in). The enzyme catalyses serotonin(out) = serotonin(in). It catalyses the reaction dopamine(out) = dopamine(in). It carries out the reaction histamine(out) = histamine(in). The catalysed reaction is thiamine(in) = thiamine(out). The enzyme catalyses creatinine(in) = creatinine(out). It catalyses the reaction 1-methylnicotinamide(out) = 1-methylnicotinamide(in). It carries out the reaction guanidine(out) = guanidine(in). The catalysed reaction is choline(out) = choline(in). The enzyme catalyses agmatine(out) = agmatine(in). It catalyses the reaction putrescine(out) = putrescine(in). It carries out the reaction spermidine(in) = spermidine(out). The catalysed reaction is tyramine(in) = tyramine(out). The enzyme catalyses L-histidyl-L-proline diketopiperazine(in) = L-histidyl-L-proline diketopiperazine(out). It catalyses the reaction (R)-salsolinol(in) = (R)-salsolinol(out). It carries out the reaction N-methyl-(R)-salsolinol(in) = N-methyl-(R)-salsolinol(out). The catalysed reaction is acetylcholine(in) = acetylcholine(out). The enzyme catalyses prostaglandin F2alpha(out) = prostaglandin F2alpha(in). It catalyses the reaction prostaglandin E2(out) = prostaglandin E2(in). With respect to regulation, tyrosine phosphorylation of the transporter leads to activation of the transport activity. TEA uptake is activated by tyrosine phosphorylation. Inhibited by cGMP, most likely through a cGMP-binding protein that interacts with OCT2. Electrogenic voltage-dependent transporter that mediates the transport of a variety of organic cations such as endogenous bioactive amines, cationic drugs and xenobiotics. Functions as a Na(+)-independent, bidirectional uniporter. Cation cellular uptake or release is driven by the electrochemical potential, i.e. membrane potential and concentration gradient. However, may also engage electroneutral cation exchange when saturating concentrations of cation substrates are reached. Predominantly expressed at the basolateral membrane of hepatocytes and proximal tubules and involved in the uptake and disposition of cationic compounds by hepatic and renal clearance from the blood flow. Implicated in monoamine neurotransmitters uptake such as histamine, dopamine, adrenaline/epinephrine, noradrenaline/norepinephrine, serotonin and tyramine, thereby supporting a physiological role in the central nervous system by regulating interstitial concentrations of neurotransmitters. Also capable of transporting dopaminergic neuromodulators cyclo(his-pro), salsolinol and N-methyl-salsolinol, thereby involved in the maintenance of dopaminergic cell integrity in the central nervous system. Mediates the bidirectional transport of acetylcholine (ACh) at the apical membrane of ciliated cell in airway epithelium, thereby playing a role in luminal release of ACh from bronchial epithelium. Also transports guanidine and endogenous monoamines such as vitamin B1/thiamine, creatinine and N-1-methylnicotinamide (NMN). Mediates the uptake and efflux of quaternary ammonium compound choline. Mediates the bidirectional transport of polyamine agmatine and the uptake of polyamines putrescine and spermidine. Able to transport non-amine endogenous compounds such as prostaglandin E2 (PGE2) and prostaglandin F2-alpha (PGF2-alpha). Also involved in the uptake of xenobiotic 4-(4-(dimethylamino)styryl)-N-methylpyridinium (ASP). May contribute to regulate the transport of organic compounds in testis across the blood-testis-barrier. In terms of biological role, in contrast with isoform 1, not able to transport guanidine, creatinine, cimetidine and metformin. This is Solute carrier family 22 member 2 from Homo sapiens (Human).